A 153-amino-acid chain; its full sequence is D-aminoacyl-tRNA deacylase (153 aa).

A Gly-cisPro motif, important for rejection of L-amino acids motif is present at residues Gly142–Pro143.

The protein belongs to the DTD family. As to quaternary structure, homodimer.

Its subcellular location is the cytoplasm. It carries out the reaction glycyl-tRNA(Ala) + H2O = tRNA(Ala) + glycine + H(+). It catalyses the reaction a D-aminoacyl-tRNA + H2O = a tRNA + a D-alpha-amino acid + H(+). An aminoacyl-tRNA editing enzyme that deacylates mischarged D-aminoacyl-tRNAs. Also deacylates mischarged glycyl-tRNA(Ala), protecting cells against glycine mischarging by AlaRS. Acts via tRNA-based rather than protein-based catalysis; rejects L-amino acids rather than detecting D-amino acids in the active site. By recycling D-aminoacyl-tRNA to D-amino acids and free tRNA molecules, this enzyme counteracts the toxicity associated with the formation of D-aminoacyl-tRNA entities in vivo and helps enforce protein L-homochirality. This chain is D-aminoacyl-tRNA deacylase, found in Cupriavidus necator (strain ATCC 17699 / DSM 428 / KCTC 22496 / NCIMB 10442 / H16 / Stanier 337) (Ralstonia eutropha).